We begin with the raw amino-acid sequence, 116 residues long: MEQKKPLESSASIKYVRISPFKVRRILNQIKGRSAKEALMILKFMPYKPSTLIFKLLKSAVSNSIKNYDEDANVLRVLEARADAGPILKRLCPHAQGRGFPIKKRTCHITIKLSIL.

It belongs to the universal ribosomal protein uL22 family. Part of the 50S ribosomal subunit.

It is found in the plastid. Its subcellular location is the chloroplast. Functionally, this protein binds specifically to 23S rRNA. In terms of biological role, the globular domain of the protein is located near the polypeptide exit tunnel on the outside of the subunit, while an extended beta-hairpin is found that lines the wall of the exit tunnel in the center of the 70S ribosome. This chain is Large ribosomal subunit protein uL22c (rpl22), found in Euglena gracilis.